We begin with the raw amino-acid sequence, 556 residues long: Arginine--tRNA ligase (556 aa).

The 'HIGH' region signature appears at 132 to 142; sequence ANPTGDLHLGH.

Belongs to the class-I aminoacyl-tRNA synthetase family. Monomer.

It is found in the cytoplasm. The catalysed reaction is tRNA(Arg) + L-arginine + ATP = L-arginyl-tRNA(Arg) + AMP + diphosphate. The sequence is that of Arginine--tRNA ligase (argS) from Bacillus subtilis (strain 168).